We begin with the raw amino-acid sequence, 403 residues long: MEKKGQHGTYESMMTHHPILCIIALSVLFIAIDPFHMSPIGGREFKPVKHEVAPYKEVMGSWPRDNLSRLGNHGKLEFVDQVFGPESLEFDSLGRGPYTGLADGRVVRWMGEAIGWETFSVVTSKWSEEACVRGVDSTTNKQWKHEKLCGRPLGLRFHKETGNLYIADAYYGLLVVGPEGGIATPLATHVEGKPILFANDLDIHRNGSIFFTDTSKRYDRANHFFILLEGESTGRLLRYDPPTKTTHIVLEGLAFPNGIQLSKDQSFLLFTETTNCRLVKYWLEGPKMGEVEVVADLPGFPDNVRINEEGQFWVAIDCCRTPAQEVLTNNPWIRSIYFRLPIPMKLLAKTMGMRMYTVISRFDEEGKVLEVLEDRQGKVMKLWIGTVAHNHIATLPYPLTMNQ.

Residues 1 to 42 form the signal peptide; that stretch reads MEKKGQHGTYESMMTHHPILCIIALSVLFIAIDPFHMSPIGG. N-linked (GlcNAc...) asparagine glycans are attached at residues asparagine 66 and asparagine 206.

Belongs to the strictosidine synthase family.

The protein resides in the vacuole. In terms of biological role, required for the exine formation during pollen development. The polypeptide is Protein STRICTOSIDINE SYNTHASE-LIKE 13 (Arabidopsis thaliana (Mouse-ear cress)).